We begin with the raw amino-acid sequence, 1846 residues long: MEQLTTLPRLGDLGAMEPWALPAWQHWTQGQGCKPGDASPSIAGTPTALQVKGLRFEESSKPEGAHSPGPVGNTDPEATETGLPKLGQQAESPGYSCSGLEEEEAQAYKAKFNIGFGDRPNLELLRALGELQQRCTILKEENQMLRKSSFPETEEKVRRLKRKNAELAVIAKRLEERAQKLQETNMRVVSAPVPRPGSSLELCRKALARQRARDLSETASALLAKDKQIAALQRECRELQARLSLVGKEGPQWLHMRDFDRLLRESQREVLRLQRQIALRNQREPLRPARSPGPTAPSRVGAPAPGAPGEAVLQDDVESPQVVLREPEKQQRVQQLESELCKKRKKCESLEQEARKKQRRCEELELQLRAAQNENARLVEENSRLSGRATEKEQVEWENSELKGQLLGVTQERDSALLKSQGLQSKLESLEQVLKHMREVAQRRQQLEVEHEQARLSLQEKQEEVRRLQQAQAEAKREHEGAVQLLESTLDSMQARVRELEGQCRSQTERFSLLAQELQAFRLHPGPLDLLTSALGCSALGDHPPPHCCCSIPQPCQGSGPKDLDLPPGSPGRCTPKSSEPALTTLTGIPRRTAKKAESLSNSSRSESIHNSPKSCPTPEVDTASEVEELEVDSVSLLPAAPESHSGGARIQVFLARYSYNPFEGPNENPEAELPLTAGEYIYIYGNMDEDGFFEGELMDGRRGLVPSNFVERVSDDDLLSTLPRELADSSHSSGPELSFLSGGGGGCSSGGQSSGGRSQPRPEEEAAGDELSLSPPPEGLGEPLAVPYPRHITVLKQLAHSVVLAWELPPERVDLRGFHIFVNGELRQALGPGVPPKAVLENMDLRTGPLHVSVQALTSKGSSDPLRCCLAVGAGAGVVPSQLRIHRLTATSAEIAWVPGNSNLAHAIYLNGEECPPARPSTYWATFCNLRPGTLYQARVEAQIPSQGPWEPGWERPEQRAATLQFTTLPAGLPDAPLDVQAEPGPSPGILMISWLPVTIDAAGTSNGVRVTGYAIYADGQKIMEVASPTAGSVLVEVSQLQLLQACHEVTVRTMSPHGESSDSIPAPVAPALASACQPARMSCLSPRPSPEVRTPLASVSPGLGDTSFPLRHPVPHGTQDFSASLSIEMSKGPQEEPPVPCSQEEAGAAVRSISEEKRAIEPTLGQEGPEPVAPSLAKQEVECTSGDAGPVPCSTQGELTQKKPSIEACHGGDLDSGLKLRSEKEDMSELGVHLVNSLVDHSRNSDLSDIQEEEEEEEEEEEELGSRPCSSQKQVAGNSIRENGAKPQPDPFCETDSDEEILEQILELPLQRLCSKKLFSIPEEEEEEEEEEGLEKPGPSRTSQDPSQPELALLGPGCDSSQPQGPGLCPLSPELSGVREHLEDVLGVVGGNGRRRGGGSPEKLPNRKRPQDPREHCSRLLGNGGPQASARPVPPRERGSLPVIEGTRVGQEPGGRGRPGLSRRCPRGPAPESSLVSCLSPKCLEISIEYDSEDEQEAGSGGVSINSSCYPTDGEAWGTAAVGRPRGPPKVNPGPNAYLRLPAWEKGEPERRGRSAIGRTKEPPSRATETGESRGQDNSGRRGPQRRGARVPRSGTTELAPPRSPQEAPPHQDLPVRVFVALFDYDPVSMSPNPDAGEEELPFKEGQLLKVFGDKDADGFYRGESGGRTGYIPCNMVAEVAVDSPAGRQQLLQRGFLPPNVLTEASGNGPSVYSSAHTPGPPPKPRRSKKVELEGPTQLCPGPPKLIHSAAQKTSRPMVAAFDYNPRENSPNMDVEAELPFRAGDVITVFGNMDDDGFYYGELNGQRGLVPSNFLEGPGPESGSLESGTSQAESQRTRRRRVQC.

Disordered stretches follow at residues 57–97, 281–318, and 560–628; these read EESS…GYSC, NQRE…DDVE, and GPKD…SEVE. A compositionally biased stretch (polar residues) spans 576–587; it reads PKSSEPALTTLT. The segment covering 599–612 has biased composition (low complexity); the sequence is SLSNSSRSESIHNS. An SH3 1 domain is found at 649 to 716; that stretch reads ARIQVFLARY…PSNFVERVSD (68 aa). Residues 726–785 are disordered; it reads ELADSSHSSGPELSFLSGGGGGCSSGGQSSGGRSQPRPEEEAAGDELSLSPPPEGLGEPL. Gly residues predominate over residues 742 to 755; that stretch reads SGGGGGCSSGGQSS. 3 consecutive Fibronectin type-III domains span residues 787-878, 880-972, and 977-1075; these read VPYP…AGAG, VPSQ…TLPA, and APLD…PALA. Disordered stretches follow at residues 1084-1107, 1163-1219, 1243-1302, 1322-1476, 1492-1617, 1704-1755, and 1812-1846; these read SCLS…GLGD, EPTL…LDSG, HSRN…SDEE, SIPE…PESS, YDSE…QDLP, LTEA…AAQK, and VPSN…RVQC. Basic and acidic residues predominate over residues 1202–1219; sequence TQKKPSIEACHGGDLDSG. Over residues 1251-1265 the composition is skewed to acidic residues; the sequence is DIQEEEEEEEEEEEE. The span at 1270–1283 shows a compositional bias: polar residues; that stretch reads PCSSQKQVAGNSIR. Residues 1324-1335 are compositionally biased toward acidic residues; it reads PEEEEEEEEEEG. 2 stretches are compositionally biased toward basic and acidic residues: residues 1411–1420 and 1545–1577; these read RPQDPREHCS and AWEK…ESRG. Residues 1616 to 1684 enclose the SH3 2 domain; the sequence is LPVRVFVALF…PCNMVAEVAV (69 aa). Polar residues predominate over residues 1705–1719; the sequence is TEASGNGPSVYSSAH. The SH3 3 domain maps to 1755–1822; that stretch reads KTSRPMVAAF…PSNFLEGPGP (68 aa). The segment covering 1817-1830 has biased composition (low complexity); the sequence is LEGPGPESGSLESG.

The protein belongs to the RIMBP family. In terms of assembly, interacts with RIMS1 and RIMS2. Interacts with TSPO. Interacts with CACNA1A. Predominantly expressed in the brain.

It localises to the cytoplasm. It is found in the mitochondrion. Its function is as follows. Required for synaptic transmission regulation. It probably controls the recruitement of voltage-gated calcium channels to the presynaptic membrane, and modulates neurotransmitter release. The chain is Peripheral-type benzodiazepine receptor-associated protein 1 from Mus musculus (Mouse).